Consider the following 317-residue polypeptide: Non-structural protein 2 (317 aa).

ATP-binding positions include 107–109, Lys-188, and 221–223; these read SVR and HGK. The segment at 205–241 is RNA-binding; that stretch reads LVAELRWQYNRFAVITHGKGHYRVVKYSSVANHADRV. Residue His-225 is the For NTPase and RTPase activities of the active site. Arg-227 contacts ATP.

Belongs to the rotavirus NSP2 family. As to quaternary structure, homooctamer. Interacts with VP1; this interaction is weak. Interacts with NSP5; this interaction leads to up-regulation of NSP5 phosphorylation and formation of viral factories. Interacts with host DCP1A, DCP1B, DDX6, EDC4 and EIF2S1/eIF2-alpha; these interactions are probably part of the sequestration of some host SGs and PBs proteins in viral factories. It depends on Mg(2+) as a cofactor.

Its subcellular location is the host cytoplasm. Participates in replication and packaging of the viral genome. Plays a crucial role, together with NSP5, in the formation of virus factories (viroplasms), which are large inclusions in the host cytoplasm where replication intermediates are assembled and viral RNA replication takes place. Displays ssRNA binding, NTPase, RNA triphosphatase (RTPase) and ATP-independent helix-unwinding activities. The unwinding activity may prepare and organize plus-strand RNAs for packaging and replication by removing interfering secondary structures. The RTPase activity plays a role in the removal of the gamma-phosphate from the rotavirus RNA minus strands of dsRNA genome segments. Participates in the selective exclusion of host proteins from stress granules (SG) and P bodies (PB). Also participates in the sequestration of these remodeled organelles in viral factories. The protein is Non-structural protein 2 of Homo sapiens (Human).